The chain runs to 376 residues: Chaperone protein DnaJ (376 aa).

The 66-residue stretch at 5-70 (DFYDVLGVSK…EKKQNYDNFG (66 aa)) folds into the J domain. The CR-type zinc finger occupies 137–215 (GKKQDIKFST…CNGQGNKQAS (79 aa)). The Zn(2+) site is built by C150, C153, C167, C170, C189, C192, C203, and C206. 4 CXXCXGXG motif repeats span residues 150-157 (CNTCNGNG), 167-174 (CTVCGGNG), 189-196 (CPQCAGSG), and 203-210 (CTDCNGQG).

Belongs to the DnaJ family. Homodimer. The cofactor is Zn(2+).

It localises to the cytoplasm. Functionally, participates actively in the response to hyperosmotic and heat shock by preventing the aggregation of stress-denatured proteins and by disaggregating proteins, also in an autonomous, DnaK-independent fashion. Unfolded proteins bind initially to DnaJ; upon interaction with the DnaJ-bound protein, DnaK hydrolyzes its bound ATP, resulting in the formation of a stable complex. GrpE releases ADP from DnaK; ATP binding to DnaK triggers the release of the substrate protein, thus completing the reaction cycle. Several rounds of ATP-dependent interactions between DnaJ, DnaK and GrpE are required for fully efficient folding. Also involved, together with DnaK and GrpE, in the DNA replication of plasmids through activation of initiation proteins. The chain is Chaperone protein DnaJ from Pelagibacter ubique (strain HTCC1062).